Here is a 369-residue protein sequence, read N- to C-terminus: 2-aminoethylphosphonate--pyruvate transaminase (369 aa).

The residue at position 193 (Lys-193) is an N6-(pyridoxal phosphate)lysine.

Belongs to the class-V pyridoxal-phosphate-dependent aminotransferase family. PhnW subfamily. As to quaternary structure, homodimer. It depends on pyridoxal 5'-phosphate as a cofactor.

The catalysed reaction is (2-aminoethyl)phosphonate + pyruvate = phosphonoacetaldehyde + L-alanine. Involved in phosphonate degradation. This is 2-aminoethylphosphonate--pyruvate transaminase from Burkholderia thailandensis (strain ATCC 700388 / DSM 13276 / CCUG 48851 / CIP 106301 / E264).